Consider the following 229-residue polypeptide: 2-C-methyl-D-erythritol 4-phosphate cytidylyltransferase (229 aa).

Belongs to the IspD/TarI cytidylyltransferase family. IspD subfamily.

The catalysed reaction is 2-C-methyl-D-erythritol 4-phosphate + CTP + H(+) = 4-CDP-2-C-methyl-D-erythritol + diphosphate. It participates in isoprenoid biosynthesis; isopentenyl diphosphate biosynthesis via DXP pathway; isopentenyl diphosphate from 1-deoxy-D-xylulose 5-phosphate: step 2/6. In terms of biological role, catalyzes the formation of 4-diphosphocytidyl-2-C-methyl-D-erythritol from CTP and 2-C-methyl-D-erythritol 4-phosphate (MEP). The protein is 2-C-methyl-D-erythritol 4-phosphate cytidylyltransferase of Neisseria meningitidis serogroup C (strain 053442).